Reading from the N-terminus, the 151-residue chain is Putative pre-16S rRNA nuclease (151 aa).

The protein belongs to the YqgF nuclease family.

Its subcellular location is the cytoplasm. Could be a nuclease involved in processing of the 5'-end of pre-16S rRNA. The chain is Putative pre-16S rRNA nuclease from Bifidobacterium adolescentis (strain ATCC 15703 / DSM 20083 / NCTC 11814 / E194a).